A 455-amino-acid polypeptide reads, in one-letter code: MGCCLSKKPSPSLPSSVKPSDPIKPMEPVIEPLEEEAKPKSEKLNQEEEEEEVVVIKHTRSHEERSKKTESDKDSPVSSPVAAEKSNSTPLVRISSCTKEEVDAILIQCGKLSRSNSAAKTRRYSGSKRSFDFDQNERIRGGDAAEEDGMQRNRHRGVERVHGSPRERRRRTPSRERERSGSRERGNVGGGGGGSRRVSRSPAKRSEIRNADSCGSSVNSSNNRPGKFVTIPATDKSNNVEPLVKRITVKRNIGDACRIAASPRSKSPARAGNNVPSLSRSNSRKAEQSPYRRNPLGEIDQNTKKMIESVKPNSRTSRGPSPSRVAVVELTKAPQVVLSRSRSLRKSRDFDLVSNEDNNYTALLLKDIQSFHGKSVDDSVISLPLCVSKACSIVEAVADLNSMTNRTCLRSDSSRFRFTSTVKKADLMEPSFEKYVTVKRGGGSLEESSGSNNVT.

Residues 1-20 show a composition bias toward low complexity; it reads MGCCLSKKPSPSLPSSVKPS. Disordered regions lie at residues 1 to 234 and 258 to 304; these read MGCC…IPAT and RIAA…QNTK. Composition is skewed to basic and acidic residues over residues 35-46, 61-75, 129-143, 156-166, and 173-186; these read EEAKPKSEKLNQ, SHEE…DKDS, RSFD…RGGD, RGVERVHGSPR, and PSRE…RERG. Polar residues predominate over residues 213-224; sequence SCGSSVNSSNNR. Residues 260–271 are compositionally biased toward low complexity; that stretch reads AASPRSKSPARA.

This is an uncharacterized protein from Arabidopsis thaliana (Mouse-ear cress).